Here is a 341-residue protein sequence, read N- to C-terminus: Glycerol-3-phosphate dehydrogenase [NAD(P)+] (341 aa).

NADPH is bound by residues serine 14, phenylalanine 15, arginine 35, and lysine 108. Residues lysine 108 and glycine 136 each coordinate sn-glycerol 3-phosphate. Alanine 140 is an NADPH binding site. Residues lysine 191, aspartate 244, serine 254, arginine 255, and asparagine 256 each contribute to the sn-glycerol 3-phosphate site. The active-site Proton acceptor is lysine 191. Arginine 255 lines the NADPH pocket. Residues valine 279 and glutamate 281 each contribute to the NADPH site.

The protein belongs to the NAD-dependent glycerol-3-phosphate dehydrogenase family.

Its subcellular location is the cytoplasm. It catalyses the reaction sn-glycerol 3-phosphate + NAD(+) = dihydroxyacetone phosphate + NADH + H(+). The catalysed reaction is sn-glycerol 3-phosphate + NADP(+) = dihydroxyacetone phosphate + NADPH + H(+). The protein operates within membrane lipid metabolism; glycerophospholipid metabolism. Its function is as follows. Catalyzes the reduction of the glycolytic intermediate dihydroxyacetone phosphate (DHAP) to sn-glycerol 3-phosphate (G3P), the key precursor for phospholipid synthesis. This chain is Glycerol-3-phosphate dehydrogenase [NAD(P)+], found in Pseudomonas putida (strain ATCC 47054 / DSM 6125 / CFBP 8728 / NCIMB 11950 / KT2440).